Consider the following 200-residue polypeptide: Probable molybdenum cofactor guanylyltransferase (200 aa).

GTP contacts are provided by residues 9–11 (LAG), Lys21, Asp69, and Asp100. Asp100 is a Mg(2+) binding site.

This sequence belongs to the MobA family. Mg(2+) is required as a cofactor.

Its subcellular location is the cytoplasm. The enzyme catalyses Mo-molybdopterin + GTP + H(+) = Mo-molybdopterin guanine dinucleotide + diphosphate. Functionally, transfers a GMP moiety from GTP to Mo-molybdopterin (Mo-MPT) cofactor (Moco or molybdenum cofactor) to form Mo-molybdopterin guanine dinucleotide (Mo-MGD) cofactor. The polypeptide is Probable molybdenum cofactor guanylyltransferase (Bacillus cereus (strain B4264)).